The following is a 950-amino-acid chain: MLSSWQGGPRPRQLLLWLLILAAWETGSGQLHYSVPEEAKHGTFVGRIAQDLGLELAELVPRLFRVASKTHGDLLEVNLQNGILFVNSRIDREELCGRSAECSVHLEVIVDRPLQVFHVEVKVRDINDNPPIFPESKKRIIVAESRPPETRFPLDGASDADIGVNSALTYRLDPNDYFTLDAQNSLEQMSSLSLVLRKTLDREEIQEHSLLLTASDGGKPELTGTVQLLITILDVNDNAPEFYQSVYKVTVLENAFNGTLVIKLNATDPDDGTNGDIVYSFRRPVSPAVVYAFTINPNNGEIRTKGKLDFEEKKLYEISVEAVDKGNIPMAGHCTLLVEVLDVNDNAPEVTITSLSLPIREDTQPSAIIALISVSDRDSGSNGQVTCTLTPHVPFKLVSTYKNYYSLVLDSALDRESVSAYELVVTARDGGSPSLWATASVSVGVADVNDNAPAFAQPEYTVFVKENNPPGCHIFTVSAQDADAQENALVSYSLVERRVGERALSSYVSVHAESGKVYALQPLDHEELELLQFQVSARDSGVPPLGSNVTLQVFVLDENDNAPALLTPGAGSAGGTVSELMPRSVGAGHVVVKVRAVDADSGYNAWLSYELQLAAVGARIPFCVGLYTGEISTTRPLDEVDAPHHRLLVLVKDHGEPALTATATVLLSLVESGQAPQASSRASAGAVGPEAALVDVNVYLIIAICAVSSLLVLTLLLYTALRCSAPPTEGVCAPGKPTLVCSSAAGSWSYSQQRRPRVCSGEGPHKTDLMAFSPSLPPCLGSAEGTGQREEDSEGLKEPRQPNPDWRYSASLRAGMHSSVHLEEAGILRAGPGGPDQQWPTVSSATPEPEAGEVSPPVGAGVNSNSWTFKYGPGNPKQSGPGELPDKFIIPGSPAIISIRQEPANSQIDKSDFITFGKKEETKKKKKKKKGNKTQEKKEKGNSTTDNSDQ.

The first 29 residues, 1–29, serve as a signal peptide directing secretion; sequence MLSSWQGGPRPRQLLLWLLILAAWETGSG. Residues 30–697 lie on the Extracellular side of the membrane; it reads QLHYSVPEEA…GPEAALVDVN (668 aa). Cadherin domains lie at 34–133, 134–242, 243–350, 351–455, 456–565, and 581–678; these read SVPE…PPIF, PESK…APEF, YQSV…APEV, TITS…APAF, AQPE…APAL, and MPRS…APQA. N-linked (GlcNAc...) asparagine glycosylation is found at Asn-257 and Asn-265. An N-linked (GlcNAc...) asparagine glycan is attached at Asn-548. A helical membrane pass occupies residues 698–718; the sequence is VYLIIAICAVSSLLVLTLLLY. Residues 719–950 lie on the Cytoplasmic side of the membrane; that stretch reads TALRCSAPPT…GNSTTDNSDQ (232 aa). PXXP repeat units lie at residues 734–737, 774–777, 799–802, 832–835, 873–876, and 891–894; these read PGKP, PSLP, PRQP, PGGP, PGNP, and PGSP. The interval 734–894 is 6 X 4 AA repeats of P-X-X-P; it reads PGKPTLVCSS…PDKFIIPGSP (161 aa). 2 disordered regions span residues 774 to 808 and 827 to 950; these read PSLPPCLGSAEGTGQREEDSEGLKEPRQPNPDWRY and ILRA…NSDQ. The span at 787–800 shows a compositional bias: basic and acidic residues; sequence GQREEDSEGLKEPR. Over residues 909–923 the composition is skewed to basic and acidic residues; it reads DKSDFITFGKKEETK.

It is found in the cell membrane. In terms of biological role, potential calcium-dependent cell-adhesion protein. May be involved in the establishment and maintenance of specific neuronal connections in the brain. This is Protocadherin alpha-13 (PCDHA13) from Pan troglodytes (Chimpanzee).